The chain runs to 105 residues: Phosphoribosyl-ATP pyrophosphatase (105 aa).

It belongs to the PRA-PH family.

The protein localises to the cytoplasm. It catalyses the reaction 1-(5-phospho-beta-D-ribosyl)-ATP + H2O = 1-(5-phospho-beta-D-ribosyl)-5'-AMP + diphosphate + H(+). Its pathway is amino-acid biosynthesis; L-histidine biosynthesis; L-histidine from 5-phospho-alpha-D-ribose 1-diphosphate: step 2/9. The sequence is that of Phosphoribosyl-ATP pyrophosphatase from Vesicomyosocius okutanii subsp. Calyptogena okutanii (strain HA).